The chain runs to 350 residues: Leucine-rich repeat-containing protein 23 (350 aa).

Residues 1-54 (MEDETLEDGPEEEEEDEEEGTAEETNQDVTERDEEEEAEKDEEEDKEEEEEAEK) are compositionally biased toward acidic residues. Residues 1 to 64 (MEDETLEDGP…EEPPPHMPLS (64 aa)) are disordered. LRR repeat units lie at residues 107–128 (HLRYVDLSQNSLQDLSPLGALT), 129–150 (HLLSLRADHNQLVSVSGLGELP), 151–171 (YLQVASFAQNRIKSLQGFGHP), 172–193 (RLETLNLIGNELRDLEGLECSN), 196–216 (SLHTLELRSNQLLSTAGLNLP), 217–238 (SLRELYLGQNNISRLEGLEALV), 239–260 (NLTTLHLRDNQLESLDGFSEHL), and 262–283 (ALQYLNLRSNMVAKLQEVQKLY). The LRRCT domain maps to 296–334 (NPCEEEEGYRMETLIALPQLERLDKDFFEEEEKREAAET). The stretch at 314–344 (QLERLDKDFFEEEEKREAAETKKAREEEMAE) forms a coiled coil. A disordered region spans residues 325–350 (EEEKREAAETKKAREEEMAEPGEKGN).

The protein localises to the cytoplasm. It localises to the cytoskeleton. The protein resides in the flagellum axoneme. This chain is Leucine-rich repeat-containing protein 23 (lrrc23), found in Xenopus tropicalis (Western clawed frog).